The primary structure comprises 379 residues: Small ribosomal subunit protein uS2cy (379 aa).

An N-terminal extension region spans residues 1–94; that stretch reads MKLVQFFEIG…MGTSSNRAKS (94 aa). A disordered region spans residues 83–106; the sequence is NQMGTSSNRAKSTDTPAVSTSQNV.

This sequence belongs to the universal ribosomal protein uS2 family.

The protein localises to the plastid. It localises to the chloroplast. In Tetradesmus obliquus (Green alga), this protein is Small ribosomal subunit protein uS2cy (rps2-2).